Here is a 547-residue protein sequence, read N- to C-terminus: Chaperonin GroEL (547 aa).

ATP contacts are provided by residues 30 to 33, Lys-51, 87 to 91, Gly-415, and Asp-495; these read TLGP and DGTTT. The disordered stretch occupies residues 526-547; that stretch reads KKESAGGGGMPGGMGGMGGMDF. The segment covering 530 to 547 has biased composition (gly residues); sequence AGGGGMPGGMGGMGGMDF.

It belongs to the chaperonin (HSP60) family. In terms of assembly, forms a cylinder of 14 subunits composed of two heptameric rings stacked back-to-back. Interacts with the co-chaperonin GroES.

It is found in the cytoplasm. It carries out the reaction ATP + H2O + a folded polypeptide = ADP + phosphate + an unfolded polypeptide.. Functionally, together with its co-chaperonin GroES, plays an essential role in assisting protein folding. The GroEL-GroES system forms a nano-cage that allows encapsulation of the non-native substrate proteins and provides a physical environment optimized to promote and accelerate protein folding. The protein is Chaperonin GroEL of Hyphomonas neptunium (strain ATCC 15444).